The sequence spans 156 residues: Small ribosomal subunit protein uS15 (156 aa).

A disordered region spans residues 1–67; the sequence is MARMHTRRRG…GVQGTPIPDV (67 aa). The span at 10-19 shows a compositional bias: basic and acidic residues; sequence GSSDSDKPAA. A compositionally biased stretch (acidic residues) spans 21–32; that stretch reads EPPEWSDVDEDA.

This sequence belongs to the universal ribosomal protein uS15 family. As to quaternary structure, part of the 30S ribosomal subunit.

The protein is Small ribosomal subunit protein uS15 of Haloarcula marismortui (strain ATCC 43049 / DSM 3752 / JCM 8966 / VKM B-1809) (Halobacterium marismortui).